The chain runs to 294 residues: Probable 2-(5''-triphosphoribosyl)-3'-dephosphocoenzyme-A synthase (294 aa).

Belongs to the CitG/MdcB family.

The catalysed reaction is 3'-dephospho-CoA + ATP = 2'-(5''-triphospho-alpha-D-ribosyl)-3'-dephospho-CoA + adenine. The polypeptide is Probable 2-(5''-triphosphoribosyl)-3'-dephosphocoenzyme-A synthase (Streptococcus equi subsp. zooepidemicus (strain H70)).